Reading from the N-terminus, the 286-residue chain is Pantothenate synthetase (286 aa).

30-37 (MGALHEGH) lines the ATP pocket. Residue histidine 37 is the Proton donor of the active site. Glutamine 61 lines the (R)-pantoate pocket. Glutamine 61 contacts beta-alanine. 147 to 150 (GEKD) contacts ATP. Glutamine 153 is a binding site for (R)-pantoate. ATP contacts are provided by residues leucine 176 and 184–187 (HSSR).

Belongs to the pantothenate synthetase family. Homodimer.

It localises to the cytoplasm. It catalyses the reaction (R)-pantoate + beta-alanine + ATP = (R)-pantothenate + AMP + diphosphate + H(+). The protein operates within cofactor biosynthesis; (R)-pantothenate biosynthesis; (R)-pantothenate from (R)-pantoate and beta-alanine: step 1/1. Catalyzes the condensation of pantoate with beta-alanine in an ATP-dependent reaction via a pantoyl-adenylate intermediate. The polypeptide is Pantothenate synthetase (Bartonella tribocorum (strain CIP 105476 / IBS 506)).